The primary structure comprises 418 residues: Fumarylacetoacetase (418 aa).

Aspartate 127 is a binding site for Ca(2+). Residue histidine 134 is the Proton acceptor of the active site. Ca(2+)-binding residues include glutamate 200, glutamate 202, and aspartate 235. Mg(2+) contacts are provided by aspartate 235, lysine 255, and threonine 259.

It belongs to the FAH family. Ca(2+) is required as a cofactor. The cofactor is Mg(2+). As to expression, highly expressed in the intestine and the hypodermis.

The enzyme catalyses 4-fumarylacetoacetate + H2O = acetoacetate + fumarate + H(+). It participates in amino-acid degradation; L-phenylalanine degradation; acetoacetate and fumarate from L-phenylalanine: step 6/6. In terms of biological role, fumarylacetoacetase involved in the tyrosine degradation pathway. The chain is Fumarylacetoacetase from Caenorhabditis elegans.